We begin with the raw amino-acid sequence, 248 residues long: Prepilin leader peptidase/N-methyltransferase (248 aa).

A helical transmembrane segment spans residues 1–21; it reads MLSILFIFGLILGSFYYTAGC. The Zn(2+) site is built by Cys36, Cys39, Cys61, and Cys64. A run of 6 helical transmembrane segments spans residues 68–88, 90–110, 114–134, 143–163, 178–198, and 223–243; these read ISFM…AAGI, FGIS…IIVA, IHFM…LAAA, WYAG…IAAI, VIGF…SVLI, and AIAA…SFYI.

This sequence belongs to the peptidase A24 family. Zn(2+) is required as a cofactor.

The protein resides in the cell membrane. The enzyme catalyses Typically cleaves a -Gly-|-Phe- bond to release an N-terminal, basic peptide of 5-8 residues from type IV prepilin, and then N-methylates the new N-terminal amino group, the methyl donor being S-adenosyl-L-methionine.. Its function is as follows. Plays a role in type II pseudopili formation by proteolytically removing the leader sequence from substrate proteins and subsequently monomethylating the alpha-amino group of the newly exposed N-terminal phenylalanine. Substrates include proteins required for biogenesis of the type II general secretory apparatus. The sequence is that of Prepilin leader peptidase/N-methyltransferase (comC) from Bacillus subtilis (strain 168).